The sequence spans 482 residues: 7-deoxyloganetic acid glucosyltransferase (482 aa).

Residue His-22 is the Proton acceptor of the active site. His-22 lines the an anthocyanidin pocket. Asp-127 (charge relay) is an active-site residue. Residues Thr-149, Ala-362, Gln-364, His-379, Trp-382, Asn-383, Ser-384, and Glu-387 each coordinate UDP-alpha-D-glucose. Ala-402 lines the an anthocyanidin pocket. Positions 403 and 404 each coordinate UDP-alpha-D-glucose.

The protein belongs to the UDP-glycosyltransferase family. Expressed in leaves, roots and stems. Lower levels of expression in flowers. Preferentially expressed in internal phloem parenchyma cells.

The enzyme catalyses 7-deoxyloganetate + UDP-alpha-D-glucose = 7-deoxyloganate + UDP + H(+). Iridoid glucosyltransferase acting exclusively on 7-deoxyloganetic acid. No activity with 7-deoxyloganetin. Catalyzes the fourth to last step in secologanin biosynthesis. The chain is 7-deoxyloganetic acid glucosyltransferase (UGT709C2) from Catharanthus roseus (Madagascar periwinkle).